A 349-amino-acid polypeptide reads, in one-letter code: 5-deoxyribose 1-phosphate isomerase (349 aa).

Residues 49–51 (RGA), R92, and Q199 contribute to the substrate site. D240 functions as the Proton donor in the catalytic mechanism. Position 250–251 (250–251 (NK)) interacts with substrate.

The protein belongs to the EIF-2B alpha/beta/delta subunits family. DrdI subfamily.

The catalysed reaction is 5-deoxy-alpha-D-ribose 1-phosphate = 5-deoxy-D-ribulose 1-phosphate. Its pathway is carbohydrate degradation. Functionally, catalyzes the isomerization of 5-deoxy-alpha-D-ribose 1-phosphate to 5-deoxy-D-ribulose 1-phosphate, as part of a 5-deoxyribose salvage pathway that recycles this toxic radical SAM enzyme by-product to mainstream metabolites. The polypeptide is 5-deoxyribose 1-phosphate isomerase (Clostridium botulinum (strain Loch Maree / Type A3)).